We begin with the raw amino-acid sequence, 153 residues long: UPF0260 protein YcgN (153 aa).

It belongs to the UPF0260 family.

This is UPF0260 protein YcgN from Escherichia coli O6:K15:H31 (strain 536 / UPEC).